Consider the following 258-residue polypeptide: Imidazole glycerol phosphate synthase subunit HisF (258 aa).

Active-site residues include Asp-11 and Asp-130.

Belongs to the HisA/HisF family. Heterodimer of HisH and HisF.

It localises to the cytoplasm. It catalyses the reaction 5-[(5-phospho-1-deoxy-D-ribulos-1-ylimino)methylamino]-1-(5-phospho-beta-D-ribosyl)imidazole-4-carboxamide + L-glutamine = D-erythro-1-(imidazol-4-yl)glycerol 3-phosphate + 5-amino-1-(5-phospho-beta-D-ribosyl)imidazole-4-carboxamide + L-glutamate + H(+). It functions in the pathway amino-acid biosynthesis; L-histidine biosynthesis; L-histidine from 5-phospho-alpha-D-ribose 1-diphosphate: step 5/9. Its function is as follows. IGPS catalyzes the conversion of PRFAR and glutamine to IGP, AICAR and glutamate. The HisF subunit catalyzes the cyclization activity that produces IGP and AICAR from PRFAR using the ammonia provided by the HisH subunit. This chain is Imidazole glycerol phosphate synthase subunit HisF, found in Haemophilus influenzae (strain 86-028NP).